The following is a 497-amino-acid chain: Keratin, type II cytoskeletal 8 (497 aa).

The segment at 2–108 (TSYQRTVTVR…DPRIGQVRLE (107 aa)) is head. The segment at 109–149 (EKEQIKTLNNQFAGFIDKVRYLEQQNKLLETKWQLLQNQTT) is coil 1A. One can recognise an IF rod domain in the interval 109–421 (EKEQIKTLNN…KLLEGEESRL (313 aa)). Positions 145-162 (QNQTTPSRSNLDSMFEAY) are linker 1. The tract at residues 163–254 (ISNLRRQLDT…QIYDEEIREL (92 aa)) is coil 1B. The interval 255–278 (QTQIQDTSVIVQMDNNRQLDLDNI) is linker 12. The interval 279–417 (IAEVRAQYED…ATYRKLLEGE (139 aa)) is coil 2. The interval 418–497 (ESRLASGIQA…VSERSNIVKE (80 aa)) is tail.

Belongs to the intermediate filament family. In terms of assembly, heterotetramer of two type I and two type II keratins. Keratin-8 associates with keratin-18. In terms of tissue distribution, expressed in skin.

The protein resides in the cytoplasm. It localises to the nucleus. The protein localises to the nucleoplasm. It is found in the nucleus matrix. Its function is as follows. Together with KRT19, helps to link the contractile apparatus to dystrophin at the costameres of striated muscle. This chain is Keratin, type II cytoskeletal 8, found in Protopterus aethiopicus (Marbled lungfish).